Reading from the N-terminus, the 150-residue chain is D-aminoacyl-tRNA deacylase (150 aa).

The Gly-cisPro motif, important for rejection of L-amino acids signature appears at 138–139 (GP).

It belongs to the DTD family. As to quaternary structure, homodimer.

It is found in the cytoplasm. It catalyses the reaction glycyl-tRNA(Ala) + H2O = tRNA(Ala) + glycine + H(+). It carries out the reaction a D-aminoacyl-tRNA + H2O = a tRNA + a D-alpha-amino acid + H(+). In terms of biological role, an aminoacyl-tRNA editing enzyme that deacylates mischarged D-aminoacyl-tRNAs. Also deacylates mischarged glycyl-tRNA(Ala), protecting cells against glycine mischarging by AlaRS. Acts via tRNA-based rather than protein-based catalysis; rejects L-amino acids rather than detecting D-amino acids in the active site. By recycling D-aminoacyl-tRNA to D-amino acids and free tRNA molecules, this enzyme counteracts the toxicity associated with the formation of D-aminoacyl-tRNA entities in vivo and helps enforce protein L-homochirality. The protein is D-aminoacyl-tRNA deacylase of Dechloromonas aromatica (strain RCB).